The primary structure comprises 616 residues: Elongation factor 4 (616 aa).

A tr-type G domain is found at 14-195 (SRIRNFCIIA…EVIRQVPPPV (182 aa)). Residues 26–31 (DHGKST) and 142–145 (NKID) each bind GTP.

The protein belongs to the TRAFAC class translation factor GTPase superfamily. Classic translation factor GTPase family. LepA subfamily.

It is found in the cell membrane. The catalysed reaction is GTP + H2O = GDP + phosphate + H(+). In terms of biological role, required for accurate and efficient protein synthesis under certain stress conditions. May act as a fidelity factor of the translation reaction, by catalyzing a one-codon backward translocation of tRNAs on improperly translocated ribosomes. Back-translocation proceeds from a post-translocation (POST) complex to a pre-translocation (PRE) complex, thus giving elongation factor G a second chance to translocate the tRNAs correctly. Binds to ribosomes in a GTP-dependent manner. This is Elongation factor 4 from Nocardia farcinica (strain IFM 10152).